Here is a 546-residue protein sequence, read N- to C-terminus: NAD(P)H-quinone oxidoreductase chain 4 (546 aa).

The next 14 helical transmembrane spans lie at 17–37 (VPWLSLSILVPIVGALLVPFI), 48–68 (WYALGVTLITFLITVSAYLNG), 103–123 (LILLTSFITSLACLAAWPVSF), 127–147 (LFYFLLLAMDGGQIAVFAVQD), 149–169 (LLFFLAWELELIPVYLLLAIW), 181–201 (FILYTAGSSLFILLAALAMGF), 222–242 (GFQLLCYAGLLIAFGVKLPIV), 256–276 (TAPVHMLLAGILLKMGGYALL), 290–310 (FAPLLIVLGVVNIIYAALTSF), 327–347 (MGFVLIGVGSFSALGTSGAML), 348–368 (QMISHGLIGASLFFLVGATYD), 389–409 (FALWTVCALASLALPGMSGFV), 430–450 (VVICCLAAVGVILTPIYLLSM), and 477–497 (VYIIGCLLVPIIGIGLYPRLM).

It belongs to the complex I subunit 4 family.

The protein localises to the cellular thylakoid membrane. It catalyses the reaction a plastoquinone + NADH + (n+1) H(+)(in) = a plastoquinol + NAD(+) + n H(+)(out). The enzyme catalyses a plastoquinone + NADPH + (n+1) H(+)(in) = a plastoquinol + NADP(+) + n H(+)(out). Functionally, NDH-1 shuttles electrons from NAD(P)H, via FMN and iron-sulfur (Fe-S) centers, to quinones in the respiratory chain. The immediate electron acceptor for the enzyme in this species is believed to be plastoquinone. Couples the redox reaction to proton translocation (for every two electrons transferred, four hydrogen ions are translocated across the cytoplasmic membrane), and thus conserves the redox energy in a proton gradient. The sequence is that of NAD(P)H-quinone oxidoreductase chain 4 from Parasynechococcus marenigrum (strain WH8102).